A 404-amino-acid polypeptide reads, in one-letter code: Subtilisin-like proteinase Mp1 (404 aa).

The N-terminal stretch at 1–19 is a signal peptide; the sequence is MVGFKTLALHLAAVLPALA. A propeptide spanning residues 20-112 is cleaved from the precursor; it reads APVDKQATQV…VEPDQVWDLY (93 aa). In terms of domain architecture, Inhibitor I9 spans 33-111; sequence SYIITLKQGA…FVEPDQVWDL (79 aa). Residues 121–404 enclose the Peptidase S8 domain; that stretch reads PWGLGSISHR…NLIAFNGVTA (284 aa). A glycan (N-linked (GlcNAc...) asparagine) is linked at Asn-133. Residues Asp-154, His-186, and Ser-347 each act as charge relay system in the active site.

This sequence belongs to the peptidase S8 family.

Its subcellular location is the secreted. The protein is Subtilisin-like proteinase Mp1 of Magnaporthiopsis poae (Kentucky bluegrass fungus).